An 807-amino-acid chain; its full sequence is Anaphase-promoting complex subunit 4 (807 aa).

Position 469 is a phosphotyrosine (Tyr469). The tract at residues 755–788 (DESSDDEEEAGGKPVKIKEEVLSESETEAHQDAA) is disordered. Residues Ser757 and Ser758 each carry the phosphoserine modification. The span at 770–785 (KIKEEVLSESETEAHQ) shows a compositional bias: basic and acidic residues. Lys772 participates in a covalent cross-link: Glycyl lysine isopeptide (Lys-Gly) (interchain with G-Cter in SUMO2). Ser777 and Ser779 each carry phosphoserine. Residue Lys797 forms a Glycyl lysine isopeptide (Lys-Gly) (interchain with G-Cter in SUMO2) linkage.

The protein belongs to the APC4 family. As to quaternary structure, the mammalian APC/C is composed at least of 14 distinct subunits ANAPC1, ANAPC2, CDC27/APC3, ANAPC4, ANAPC5, CDC16/APC6, ANAPC7, CDC23/APC8, ANAPC10, ANAPC11, CDC26/APC12, ANAPC13, ANAPC15 and ANAPC16 that assemble into a complex of at least 19 chains with a combined molecular mass of around 1.2 MDa; APC/C interacts with FZR1 and FBXO5. In the context of the APC/C complex, directly interacts with UBE2S. Interacts with FBXO43.

The protein localises to the nucleus. Its pathway is protein modification; protein ubiquitination. Component of the anaphase promoting complex/cyclosome (APC/C), a cell cycle-regulated E3 ubiquitin ligase that controls progression through mitosis and the G1 phase of the cell cycle. The APC/C complex acts by mediating ubiquitination and subsequent degradation of target proteins: it mainly mediates the formation of 'Lys-11'-linked polyubiquitin chains and, to a lower extent, the formation of 'Lys-48'- and 'Lys-63'-linked polyubiquitin chains. The APC/C complex catalyzes assembly of branched 'Lys-11'-/'Lys-48'-linked branched ubiquitin chains on target proteins. This Mus musculus (Mouse) protein is Anaphase-promoting complex subunit 4 (Anapc4).